The chain runs to 599 residues: Serine/threonine-protein kinase haspin homolog (599 aa).

A Protein kinase domain is found at 287–599; it reads PESIVKIGEG…FSDMLMDQIS (313 aa). ATP contacts are provided by residues 293–301, Lys-310, 407–412, 448–453, and 486–488; these read IGEGTYGEA, EHGGKD, DLHWGN, and DFT. Asp-448 functions as the Proton acceptor in the catalytic mechanism.

The protein belongs to the protein kinase superfamily. Ser/Thr protein kinase family. Haspin subfamily. Expressed in meristems and primordia of root tips, lateral roots, shoot apex, leaves and flowers.

The protein localises to the cytoplasm. Its subcellular location is the perinuclear region. It is found in the nucleus. The protein resides in the chromosome. It localises to the cytoskeleton. The protein localises to the phragmoplast. The catalysed reaction is L-seryl-[protein] + ATP = O-phospho-L-seryl-[protein] + ADP + H(+). The enzyme catalyses L-threonyl-[protein] + ATP = O-phospho-L-threonyl-[protein] + ADP + H(+). Its function is as follows. Threonine-protein kinase that phosphorylates histone H3 in vitro at 'Thr-3' (H3T3ph) and 'Thr-11' (H3T11ph), but not at 'Ser-10' (H3S10ph) or 'Ser-28' (H3S28ph). Plays a role in mitotic cell division during plant growth. Threonine-protein kinase that phosphorylates histone H3 in vitro at 'Thr-3' (H3T3ph), but not at 'Thr-11' (H3T11ph), 'Ser-10' (H3S10ph) or 'Ser-28' (H3S28ph). Involved in histone H3 phosphorylation in mitotic cells. Contributes to organ and plant development, as well as embryonic patterning. This chain is Serine/threonine-protein kinase haspin homolog, found in Arabidopsis thaliana (Mouse-ear cress).